The chain runs to 105 residues: Immunoglobulin lambda-like polypeptide 1 (105 aa).

A c region region spans residues 1-105 (QPKSDPLVTL…EKSVSPAECS (105 aa)). The Ig-like C1-type domain maps to 6–100 (PLVTLFLPSL…EGNTVEKSVS (95 aa)). C27 and C86 are joined by a disulfide.

As to quaternary structure, associates non-covalently with VPREB1A. Interacts with SYNV1/HRD1 (via N-terminus); this interaction leads to increased IGLL1 ubiquitination and degradation in pre-B cells, possibly through a lysosomal, not proteasomal, pathway.

It is found in the endoplasmic reticulum. It localises to the secreted. Its function is as follows. Critical for B-cell development. The protein is Immunoglobulin lambda-like polypeptide 1 (Igll1) of Mus spretus (Western Mediterranean mouse).